We begin with the raw amino-acid sequence, 264 residues long: Glutamate racemase (264 aa).

Residues 10-11 (DS) and 42-43 (YG) contribute to the substrate site. Residue C73 is the Proton donor/acceptor of the active site. 74-75 (NT) serves as a coordination point for substrate. The Proton donor/acceptor role is filled by C183. Position 184 to 185 (184 to 185 (TH)) interacts with substrate.

This sequence belongs to the aspartate/glutamate racemases family.

It carries out the reaction L-glutamate = D-glutamate. It functions in the pathway cell wall biogenesis; peptidoglycan biosynthesis. In terms of biological role, provides the (R)-glutamate required for cell wall biosynthesis. This Streptococcus agalactiae serotype III (strain NEM316) protein is Glutamate racemase.